A 266-amino-acid polypeptide reads, in one-letter code: N-formylglutamate deformylase (266 aa).

Belongs to the N-formylglutamate deformylase family. In terms of assembly, monomer.

It catalyses the reaction N-formyl-L-glutamate + H2O = formate + L-glutamate. It participates in amino-acid degradation; L-histidine degradation into L-glutamate; L-glutamate from N-formimidoyl-L-glutamate (deiminase route): step 2/2. Its function is as follows. Catalyzes the hydrolysis of N-formyl-L-glutamate to formate and L-glutamate. Shows weak activity with N-formyl-L-glutamine. The sequence is that of N-formylglutamate deformylase from Pseudomonas aeruginosa (strain ATCC 15692 / DSM 22644 / CIP 104116 / JCM 14847 / LMG 12228 / 1C / PRS 101 / PAO1).